Reading from the N-terminus, the 494-residue chain is Alpha-amylase 2 (494 aa).

A signal peptide spans 1–18; that stretch reads MFLAKSIVCLALLAVANA. Cysteines 46 and 102 form a disulfide. Residues asparagine 116, arginine 165, and aspartate 174 each coordinate Ca(2+). A disulfide bond links cysteine 153 and cysteine 167. Arginine 202 provides a ligand contact to chloride. The active-site Nucleophile is aspartate 204. Residue histidine 208 coordinates Ca(2+). The Proton donor role is filled by glutamate 241. The chloride site is built by asparagine 304 and arginine 343. Positions 350–370 are disordered; the sequence is FTDTDQGPPTTDGQNIASPSF. The span at 351–363 shows a compositional bias: low complexity; the sequence is TDTDQGPPTTDGQ. 2 disulfide bridges follow: cysteine 376/cysteine 382 and cysteine 448/cysteine 460.

It belongs to the glycosyl hydrolase 13 family. As to quaternary structure, monomer. Ca(2+) serves as cofactor. Chloride is required as a cofactor.

It carries out the reaction Endohydrolysis of (1-&gt;4)-alpha-D-glucosidic linkages in polysaccharides containing three or more (1-&gt;4)-alpha-linked D-glucose units.. This is Alpha-amylase 2 (Amy58) from Drosophila ananassae (Fruit fly).